The following is a 102-amino-acid chain: Small ribosomal subunit protein uS10 (102 aa).

The protein belongs to the universal ribosomal protein uS10 family. Part of the 30S ribosomal subunit.

Involved in the binding of tRNA to the ribosomes. In Nitrosomonas eutropha (strain DSM 101675 / C91 / Nm57), this protein is Small ribosomal subunit protein uS10.